A 210-amino-acid polypeptide reads, in one-letter code: Na(+)-translocating NADH-quinone reductase subunit D (210 aa).

The next 6 helical transmembrane spans lie at 9–29 (SVLI…LGVC), 42–62 (LVMT…ISLI), 72–92 (IIVQ…VLQA), 103–123 (VFVG…AFAM), 131–151 (FMDG…VGFV), and 178–198 (NGLL…IWII).

This sequence belongs to the NqrDE/RnfAE family. Composed of six subunits; NqrA, NqrB, NqrC, NqrD, NqrE and NqrF.

The protein localises to the cell inner membrane. The enzyme catalyses a ubiquinone + n Na(+)(in) + NADH + H(+) = a ubiquinol + n Na(+)(out) + NAD(+). Functionally, NQR complex catalyzes the reduction of ubiquinone-1 to ubiquinol by two successive reactions, coupled with the transport of Na(+) ions from the cytoplasm to the periplasm. NqrA to NqrE are probably involved in the second step, the conversion of ubisemiquinone to ubiquinol. The protein is Na(+)-translocating NADH-quinone reductase subunit D of Shewanella piezotolerans (strain WP3 / JCM 13877).